We begin with the raw amino-acid sequence, 375 residues long: Chaperone protein DnaJ (375 aa).

Residues 5 to 70 (GYYEVLGVSK…QKRQAYDQFG (66 aa)) enclose the J domain. The segment at 142 to 220 (GKEYKIEIPR…CKGEGLTEKR (79 aa)) adopts a CR-type zinc-finger fold. Residues C155, C158, C172, C175, C194, C197, C208, and C211 each contribute to the Zn(2+) site. CXXCXGXG motif repeat units lie at residues 155-162 (CVDCTGSG), 172-179 (CPDCSGTG), 194-201 (CPRCKGKG), and 208-215 (CKTCKGEG).

The protein belongs to the DnaJ family. Homodimer. The cofactor is Zn(2+).

It is found in the cytoplasm. In terms of biological role, participates actively in the response to hyperosmotic and heat shock by preventing the aggregation of stress-denatured proteins and by disaggregating proteins, also in an autonomous, DnaK-independent fashion. Unfolded proteins bind initially to DnaJ; upon interaction with the DnaJ-bound protein, DnaK hydrolyzes its bound ATP, resulting in the formation of a stable complex. GrpE releases ADP from DnaK; ATP binding to DnaK triggers the release of the substrate protein, thus completing the reaction cycle. Several rounds of ATP-dependent interactions between DnaJ, DnaK and GrpE are required for fully efficient folding. Also involved, together with DnaK and GrpE, in the DNA replication of plasmids through activation of initiation proteins. This chain is Chaperone protein DnaJ, found in Leptospira biflexa serovar Patoc (strain Patoc 1 / Ames).